Here is a 363-residue protein sequence, read N- to C-terminus: UDP-N-acetylglucosamine--N-acetylmuramyl-(pentapeptide) pyrophosphoryl-undecaprenol N-acetylglucosamine transferase (363 aa).

UDP-N-acetyl-alpha-D-glucosamine contacts are provided by residues 14-16 (TGG), asparagine 122, arginine 163, serine 190, and glutamine 285.

The protein belongs to the glycosyltransferase 28 family. MurG subfamily.

The protein resides in the cell inner membrane. It carries out the reaction di-trans,octa-cis-undecaprenyl diphospho-N-acetyl-alpha-D-muramoyl-L-alanyl-D-glutamyl-meso-2,6-diaminopimeloyl-D-alanyl-D-alanine + UDP-N-acetyl-alpha-D-glucosamine = di-trans,octa-cis-undecaprenyl diphospho-[N-acetyl-alpha-D-glucosaminyl-(1-&gt;4)]-N-acetyl-alpha-D-muramoyl-L-alanyl-D-glutamyl-meso-2,6-diaminopimeloyl-D-alanyl-D-alanine + UDP + H(+). The protein operates within cell wall biogenesis; peptidoglycan biosynthesis. Cell wall formation. Catalyzes the transfer of a GlcNAc subunit on undecaprenyl-pyrophosphoryl-MurNAc-pentapeptide (lipid intermediate I) to form undecaprenyl-pyrophosphoryl-MurNAc-(pentapeptide)GlcNAc (lipid intermediate II). This Prochlorococcus marinus (strain AS9601) protein is UDP-N-acetylglucosamine--N-acetylmuramyl-(pentapeptide) pyrophosphoryl-undecaprenol N-acetylglucosamine transferase.